Consider the following 219-residue polypeptide: ATP synthase F(0) complex subunit a (219 aa).

The next 6 membrane-spanning stretches (helical) occupy residues 4–24 (PTYL…ILFP), 61–81 (WAAL…LGLL), 90–110 (QLSL…IIGM), 124–144 (EGTP…SLFI), 172–192 (FVLL…LFLL), and 194–214 (LLEI…LSLY).

The protein belongs to the ATPase A chain family. In terms of assembly, component of the ATP synthase complex composed at least of ATP5F1A/subunit alpha, ATP5F1B/subunit beta, ATP5MC1/subunit c (homooctomer), MT-ATP6/subunit a, MT-ATP8/subunit 8, ATP5ME/subunit e, ATP5MF/subunit f, ATP5MG/subunit g, ATP5MK/subunit k, ATP5MJ/subunit j, ATP5F1C/subunit gamma, ATP5F1D/subunit delta, ATP5F1E/subunit epsilon, ATP5PF/subunit F6, ATP5PB/subunit b, ATP5PD/subunit d, ATP5PO/subunit OSCP. ATP synthase complex consists of a soluble F(1) head domain (subunits alpha(3) and beta(3)) - the catalytic core - and a membrane F(0) domain - the membrane proton channel (subunits c, a, 8, e, f, g, k and j). These two domains are linked by a central stalk (subunits gamma, delta, and epsilon) rotating inside the F1 region and a stationary peripheral stalk (subunits F6, b, d, and OSCP). Interacts with DNAJC30; interaction is direct.

The protein localises to the mitochondrion inner membrane. It catalyses the reaction H(+)(in) = H(+)(out). In terms of biological role, subunit a, of the mitochondrial membrane ATP synthase complex (F(1)F(0) ATP synthase or Complex V) that produces ATP from ADP in the presence of a proton gradient across the membrane which is generated by electron transport complexes of the respiratory chain. ATP synthase complex consist of a soluble F(1) head domain - the catalytic core - and a membrane F(1) domain - the membrane proton channel. These two domains are linked by a central stalk rotating inside the F(1) region and a stationary peripheral stalk. During catalysis, ATP synthesis in the catalytic domain of F(1) is coupled via a rotary mechanism of the central stalk subunits to proton translocation. With the subunit c (ATP5MC1), forms the proton-conducting channel in the F(0) domain, that contains two crucial half-channels (inlet and outlet) that facilitate proton movement from the mitochondrial intermembrane space (IMS) into the matrix. Protons are taken up via the inlet half-channel and released through the outlet half-channel, following a Grotthuss mechanism. The protein is ATP synthase F(0) complex subunit a of Oncorhynchus masou (Cherry salmon).